The chain runs to 199 residues: MKKVVLASSSPRRIELLKQFGIKFDIVPSNVDEIIDPDLPPEKNAMNLAKKKAEEVFRRLGESAKDSLIISADTIVFIEGTILGKPSNEEEAFYMLKKISAKRHTVFTGVCIIDDSCRQILVDFEKSYVYIKQMSDEEILRYIKTGEPFDKAGAYAIQGFGSLIVEKVEGCFYNVVGLPLYKLNTMLQKLGYDLMKGEL.

Residue aspartate 73 is the Proton acceptor of the active site.

Belongs to the Maf family. YhdE subfamily. The cofactor is a divalent metal cation.

The protein localises to the cytoplasm. It carries out the reaction dTTP + H2O = dTMP + diphosphate + H(+). The catalysed reaction is UTP + H2O = UMP + diphosphate + H(+). In terms of biological role, nucleoside triphosphate pyrophosphatase that hydrolyzes dTTP and UTP. May have a dual role in cell division arrest and in preventing the incorporation of modified nucleotides into cellular nucleic acids. The polypeptide is dTTP/UTP pyrophosphatase (Caldicellulosiruptor saccharolyticus (strain ATCC 43494 / DSM 8903 / Tp8T 6331)).